Consider the following 168-residue polypeptide: MKMLGEPEFKENILYYSFLNELFLILIRNGFSCSHAKLILDETRKRGLECSGQFEVISNSVEAPEPESLERIAKTLFTPRPHWGRLVAFLAYLAYLQKNSTEKLFWNDHLKKLKQIVKCHIVPWTLGPRDPKPKQRPFDKLPSAFYFLTAAASCLTLLLLYFRTTQTK.

A helical membrane pass occupies residues 143 to 162 (SAFYFLTAAASCLTLLLLYF).

Its subcellular location is the host membrane. In terms of biological role, suppresses apoptosis in host cell and thus facilitates production of progeny virions. The chain is Putative apoptosis regulator A9 (A9) from Alcelaphine herpesvirus 1 (strain C500) (AlHV-1).